The primary structure comprises 218 residues: GTP cyclohydrolase 1 (218 aa).

C109, H112, and C180 together coordinate Zn(2+).

The protein belongs to the GTP cyclohydrolase I family. As to quaternary structure, toroid-shaped homodecamer, composed of two pentamers of five dimers.

The enzyme catalyses GTP + H2O = 7,8-dihydroneopterin 3'-triphosphate + formate + H(+). It participates in cofactor biosynthesis; 7,8-dihydroneopterin triphosphate biosynthesis; 7,8-dihydroneopterin triphosphate from GTP: step 1/1. The chain is GTP cyclohydrolase 1 from Haemophilus influenzae (strain 86-028NP).